The following is a 247-amino-acid chain: Syntaxin-like protein fsv1 (247 aa).

Residues 27–94 (NPDEEIESSL…FEKQRRASSI (68 aa)) are a coiled coil. The segment at 88-130 (QRRASSIPADGTSAFSANPQVASTNNKLTPLPSLQKTTSSSEG) is disordered. Positions 100–130 (SAFSANPQVASTNNKLTPLPSLQKTTSSSEG) are enriched in polar residues. A t-SNARE coiled-coil homology domain is found at 159–221 (QQMLNEQEES…DHAKNRLNKV (63 aa)).

It is found in the golgi apparatus membrane. Its subcellular location is the prevacuolar compartment membrane. Functionally, involved in vesicle-mediated protein transport between the Golgi and the vacuole. The sequence is that of Syntaxin-like protein fsv1 (fsv1) from Schizosaccharomyces pombe (strain 972 / ATCC 24843) (Fission yeast).